The following is a 505-amino-acid chain: Trans-cinnamate 4-monooxygenase (505 aa).

Residues 3–23 form a helical membrane-spanning segment; sequence LLLLEKSLIAVFVAVILATVI. (E)-cinnamate contacts are provided by residues 213–218 and Ala306; that span reads RSRLAQ. Residue Cys447 coordinates heme.

It belongs to the cytochrome P450 family. The cofactor is heme. In terms of tissue distribution, expressed in roots, leaves, stems, flowers and siliques.

The protein localises to the membrane. The catalysed reaction is (E)-cinnamate + reduced [NADPH--hemoprotein reductase] + O2 = (E)-4-coumarate + oxidized [NADPH--hemoprotein reductase] + H2O + H(+). The protein operates within phenylpropanoid metabolism; trans-4-coumarate biosynthesis; trans-4-coumarate from trans-cinnamate: step 1/1. Functionally, catalyzes the first oxidative step of the phenylpropanoid pathway in higher plants by transforming trans-cinnamate into p-coumarate. The compounds formed by this pathway are essential components for lignification, pollination, and defense against ultraviolet light, predators and pathogens. This is Trans-cinnamate 4-monooxygenase from Arabidopsis thaliana (Mouse-ear cress).